Reading from the N-terminus, the 268-residue chain is Nickel import ATP-binding protein NikE (268 aa).

Residues 4–252 (LNVCGLSHHY…SSDAGRVLQN (249 aa)) enclose the ABC transporter domain. ATP is bound at residue 45 to 52 (GRSGCGKS).

This sequence belongs to the ABC transporter superfamily. Nickel importer (TC 3.A.1.5.3) family. As to quaternary structure, the complex is composed of two ATP-binding proteins (NikD and NikE), two transmembrane proteins (NikB and NikC) and a solute-binding protein (NikA).

The protein localises to the cell inner membrane. The enzyme catalyses Ni(2+)(out) + ATP + H2O = Ni(2+)(in) + ADP + phosphate + H(+). Part of the ABC transporter complex NikABCDE involved in nickel import. Responsible for energy coupling to the transport system. The polypeptide is Nickel import ATP-binding protein NikE (Shigella flexneri).